A 411-amino-acid chain; its full sequence is MGEHERVVCCSSDSLLAGLSRDSDDCVSHLCTPPLLAITSWAAKERSQYSPPPGEPGPSSDKALDCMTHWSRVLEPEIVNTASEQAGKSGAWEKEWDSEPQPHEGTPCSSSDVNKDHYHDQDLVKRNHCVAKKSLEPSSAKVKVKNTMIIPDSQKLLRCELESLRSQLQAQSKAFEFLNHSVTMLEKESCLQQIKIQQLEEVLSPTSRQGEKYGRKWSTEQELYGALAQGLQGLQKTLKEGEELQRARTTRCLQLLAREIRDSKKFLWEELELVREEVTFIYQKLQDQEDEISENLLNIQKMQKTQVKCRKVLTKMKQQAYDSWPEAEGVPTEGNGCCKDDLQKELGDIWSAVHSLQSSIDCLALSMGTRPRASSLRGQKGHQCKSSQCPSWDSDSDWERPFSKSGSYPPA.

The disordered stretch occupies residues 84 to 113 (EQAGKSGAWEKEWDSEPQPHEGTPCSSSDV). Basic and acidic residues predominate over residues 91 to 102 (AWEKEWDSEPQP). Residues 269–305 (EELELVREEVTFIYQKLQDQEDEISENLLNIQKMQKT) are a coiled coil. A disordered region spans residues 372–411 (RASSLRGQKGHQCKSSQCPSWDSDSDWERPFSKSGSYPPA). Positions 384 to 393 (CKSSQCPSWD) are enriched in polar residues.

Interacts with DYNLT2. Interacts with GGNBP1. Interacts with OSBP2. Expressed in spermatids but undetectable in the spermatozoon (at protein level). Highly expressed in the testis (at protein level).

Functionally, functions during spermatid development; may participate in the centrosome reduction procedure of spermatids and is required for the formation of the connecting piece/sperm head-tail coupling apparatus (HTCA) and the correct and tight attachment of the flagellum to the nuclear envelope. This is Coiled-coil domain-containing protein 159 (Ccdc159) from Mus musculus (Mouse).